The sequence spans 358 residues: Septin-12 (358 aa).

Residues 1-25 (MDPLRRSPSPCLSSQPSSPSTPPCE) are disordered. Positions 6-18 (RSPSPCLSSQPSS) are enriched in low complexity. Residues 46–317 (MGFEFNIMVV…ENYRVIRLNE (272 aa)) enclose the Septin-type G domain. The interval 46 to 319 (MGFEFNIMVV…YRVIRLNESH (274 aa)) is interaction with SEPTIN7. The tract at residues 56–63 (GQSGLGKS) is G1 motif. GTP is bound by residues 56-63 (GQSGLGKS), threonine 89, glycine 115, 195-203 (RADSLTMEE), glycine 251, and arginine 266. Residues 112–115 (DTPG) are G3 motif. Positions 194–197 (ARAD) are G4 motif. The interval 258-358 (VNGRCVLGRK…GAHDDSDDEF (101 aa)) is self-association (via N-terminus) to polymerize octameric septin 12-7-6-2/4-2/4-6-7-12 filaments.

This sequence belongs to the TRAFAC class TrmE-Era-EngA-EngB-Septin-like GTPase superfamily. Septin GTPase family. In terms of assembly, septins polymerize into heterooligomeric protein complexes that form filaments, and can associate with cellular membranes, actin filaments and microtubules. GTPase activity is required for filament formation. Interacts with SEPTIN6 and SEPTIN11. Self-associates. Component of a septin core octameric complex consisting of SEPTIN12, SEPTIN7, SEPTIN6 and SEPTIN2 or SEPTIN4 in the order 12-7-6-2-2-6-7-12 or 12-7-6-4-4-6-7-12 and located in the sperm annulus; the octamer polymerizes into filaments via the SEPTIN12 N- and C-termini; the SEPTIN12:SEPTIN7 association is mediated by the respective GTP-binding domains. Interacts with SPAG4 and LMNB1. Associates with alpha- and beta-tubulins. In terms of tissue distribution, widely expressed. Expressed in lymph node.

It is found in the cytoplasm. Its subcellular location is the cytoskeleton. It localises to the spindle. The protein resides in the nucleus. The protein localises to the cell projection. It is found in the cilium. Its subcellular location is the flagellum. Filament-forming cytoskeletal GTPase. Involved in spermatogenesis. Involved in the morphogenesis of sperm heads and the elongation of sperm tails probably implicating the association with alpha- and beta-tubulins. Forms a filamentous structure with SEPTIN7, SEPTIN6, SEPTIN2 and probably SEPTIN4 at the sperm annulus which is required for the structural integrity and motility of the sperm tail during postmeiotic differentiation. May play a role in cytokinesis (Potential). This Homo sapiens (Human) protein is Septin-12.